A 299-amino-acid chain; its full sequence is MKPDAHQVKQFLLNLQDTICQQLTAVDGAEFVEDSWQREAGGGGRSRVLRNGGVFEQAGVNFSHVHGEAMPASATAHRPELAGRSFEAMGVSLVVHPHNPYVPTSHANVRFFIAEKPGAEPVWWFGGGFDLTPFYGFEEDAIHWHRTARDLCLPFGEDVYPRYKKWCDEYFYLKHRNEQRGIGGLFFDDLNTPDFDHCFAFMQAVGKGYTDAYLPIVERRKAMEYGEHERNFQLYRRGRYVEFNLVWDRGTLFGLQTGGRTESILMSMPPLVRWEYDYQPEAGSPEAALSEFIKVRDWV.

S92 is a substrate binding site. Residues H96 and H106 each coordinate Mn(2+). The active-site Proton donor is H106. 108-110 provides a ligand contact to substrate; it reads NVR. Mn(2+)-binding residues include H145 and H175. An important for dimerization region spans residues 240–275; it reads YVEFNLVWDRGTLFGLQTGGRTESILMSMPPLVRWE. 258-260 contributes to the substrate binding site; it reads GGR.

This sequence belongs to the aerobic coproporphyrinogen-III oxidase family. Homodimer. Requires Mn(2+) as cofactor.

The protein localises to the cytoplasm. The enzyme catalyses coproporphyrinogen III + O2 + 2 H(+) = protoporphyrinogen IX + 2 CO2 + 2 H2O. It participates in porphyrin-containing compound metabolism; protoporphyrin-IX biosynthesis; protoporphyrinogen-IX from coproporphyrinogen-III (O2 route): step 1/1. Functionally, involved in the heme biosynthesis. Catalyzes the aerobic oxidative decarboxylation of propionate groups of rings A and B of coproporphyrinogen-III to yield the vinyl groups in protoporphyrinogen-IX. The protein is Oxygen-dependent coproporphyrinogen-III oxidase of Escherichia fergusonii (strain ATCC 35469 / DSM 13698 / CCUG 18766 / IAM 14443 / JCM 21226 / LMG 7866 / NBRC 102419 / NCTC 12128 / CDC 0568-73).